A 314-amino-acid polypeptide reads, in one-letter code: DNA-directed RNA polymerase subunit alpha (314 aa).

The segment at 1 to 228 (MIEIEKPKIE…EHLNIFVGLT (228 aa)) is alpha N-terminal domain (alpha-NTD). An alpha C-terminal domain (alpha-CTD) region spans residues 245–314 (KEKVMEMTIE…DLGLGLRDDD (70 aa)).

This sequence belongs to the RNA polymerase alpha chain family. In terms of assembly, homodimer. The RNAP catalytic core consists of 2 alpha, 1 beta, 1 beta' and 1 omega subunit. When a sigma factor is associated with the core the holoenzyme is formed, which can initiate transcription.

It carries out the reaction RNA(n) + a ribonucleoside 5'-triphosphate = RNA(n+1) + diphosphate. Functionally, DNA-dependent RNA polymerase catalyzes the transcription of DNA into RNA using the four ribonucleoside triphosphates as substrates. The protein is DNA-directed RNA polymerase subunit alpha of Oceanobacillus iheyensis (strain DSM 14371 / CIP 107618 / JCM 11309 / KCTC 3954 / HTE831).